Here is a 205-residue protein sequence, read N- to C-terminus: UPF0056 membrane protein MJ1677 (205 aa).

6 consecutive transmembrane segments (helical) span residues 7–27, 49–69, 70–90, 112–132, 145–165, and 185–205; these read ILAF…PVFI, ALAI…FFGI, SLDA…LDMV, IALM…TACM, FLVI…LLSA, and GLIL…GALL.

Belongs to the UPF0056 (MarC) family.

The protein resides in the cell membrane. The polypeptide is UPF0056 membrane protein MJ1677 (Methanocaldococcus jannaschii (strain ATCC 43067 / DSM 2661 / JAL-1 / JCM 10045 / NBRC 100440) (Methanococcus jannaschii)).